A 185-amino-acid chain; its full sequence is MINEIKQDSEKRMKKTIEALHSDMSKIRTGRANASLLDHVMVDYYGSPTPLSQVANITTSDSRTILVTPWEKSMVAAIEKAILNSDLGLNPATAGTAIRVPMPPLTEERRKELIKVVRHEGEQGRVSIRNIRRDANNQLKELVKEKAISEDDERRAAEAIQKLTDRYISEVDAVLAEKEKDLMEI.

The protein belongs to the RRF family.

It localises to the cytoplasm. Its function is as follows. Responsible for the release of ribosomes from messenger RNA at the termination of protein biosynthesis. May increase the efficiency of translation by recycling ribosomes from one round of translation to another. The chain is Ribosome-recycling factor from Legionella pneumophila (strain Paris).